Reading from the N-terminus, the 273-residue chain is Ethanolamine ammonia-lyase small subunit (273 aa).

Positions 164, 185, and 214 each coordinate adenosylcob(III)alamin.

The protein belongs to the EutC family. The basic unit is a heterodimer which dimerizes to form tetramers. The heterotetramers trimerize; 6 large subunits form a core ring with 6 small subunits projecting outwards. Adenosylcob(III)alamin serves as cofactor.

Its subcellular location is the bacterial microcompartment. It carries out the reaction ethanolamine = acetaldehyde + NH4(+). It participates in amine and polyamine degradation; ethanolamine degradation. Functionally, catalyzes the deamination of various vicinal amino-alcohols to oxo compounds. Allows this organism to utilize ethanolamine as the sole source of nitrogen and carbon in the presence of external vitamin B12. The chain is Ethanolamine ammonia-lyase small subunit from Pseudomonas paraeruginosa (strain DSM 24068 / PA7) (Pseudomonas aeruginosa (strain PA7)).